The sequence spans 511 residues: 2-isopropylmalate synthase (511 aa).

Positions 4–266 (IDIFDTTLRD…ETGIQLQEIK (263 aa)) constitute a Pyruvate carboxyltransferase domain. Residues Asp-13, His-201, His-203, and Asn-237 each contribute to the Mn(2+) site. The tract at residues 392–511 (ELKMVQVQYG…IKESLRAHPV (120 aa)) is regulatory domain.

This sequence belongs to the alpha-IPM synthase/homocitrate synthase family. LeuA type 1 subfamily. As to quaternary structure, homodimer. Mn(2+) serves as cofactor.

It localises to the cytoplasm. It carries out the reaction 3-methyl-2-oxobutanoate + acetyl-CoA + H2O = (2S)-2-isopropylmalate + CoA + H(+). It participates in amino-acid biosynthesis; L-leucine biosynthesis; L-leucine from 3-methyl-2-oxobutanoate: step 1/4. In terms of biological role, catalyzes the condensation of the acetyl group of acetyl-CoA with 3-methyl-2-oxobutanoate (2-ketoisovalerate) to form 3-carboxy-3-hydroxy-4-methylpentanoate (2-isopropylmalate). This Lysinibacillus sphaericus (strain C3-41) protein is 2-isopropylmalate synthase.